The primary structure comprises 568 residues: Matrix metalloproteinase-21 (568 aa).

The N-terminal stretch at 1–24 is a signal peptide; the sequence is MLAASVLRLTLPLCWLVAPQPTQP. A propeptide spanning residues 25–143 is cleaved from the precursor; sequence ERLFHSRDRS…SLGLRPRARQ (119 aa). A Cysteine switch motif is present at residues 110-117; sequence PRCGVPDT. Zn(2+)-binding residues include Cys112 and His282. Glu283 is an active-site residue. Zn(2+) contacts are provided by His286 and His292. Cys328 and Cys559 form a disulfide bridge. Hemopexin repeat units follow at residues 329–388, 390–446, 447–495, and 502–558; these read KGSF…WRGI, TQSI…FPGI, PSPL…FPAI, and FRNL…WFDV. A glycan (N-linked (GlcNAc...) asparagine) is linked at Asn371.

It belongs to the peptidase M10A family. Zn(2+) serves as cofactor. Ca(2+) is required as a cofactor. In terms of processing, the precursor is cleaved by a furin endopeptidase.

The protein localises to the secreted. Its function is as follows. Plays a specialized role in the generation of left-right asymmetry during embryogenesis. May act as a negative regulator of the NOTCH-signaling pathway. Cleaves alpha-1-antitrypsin. The chain is Matrix metalloproteinase-21 (Mmp21) from Mus musculus (Mouse).